A 204-amino-acid polypeptide reads, in one-letter code: Somatotropin (204 aa).

The N-terminal stretch at 1–17 (MDRVVLMLSVLSLGVSS) is a signal peptide. Position 18 is a pyrrolidone carboxylic acid (Gln-18). A Zn(2+)-binding site is contributed by His-36. Residues Cys-69 and Cys-177 are joined by a disulfide bond. Glu-186 provides a ligand contact to Zn(2+). Cysteines 194 and 202 form a disulfide.

Belongs to the somatotropin/prolactin family.

The protein resides in the secreted. Functionally, growth hormone plays an important role in growth control and is involved in the regulation of several anabolic processes. Implicated as an osmoregulatory substance important for seawater adaptation. This is Somatotropin (gh) from Acanthopagrus butcheri (Australian black bream).